Consider the following 322-residue polypeptide: GRB2-related adaptor protein 2 (322 aa).

In terms of domain architecture, SH3 1 spans 1-56; sequence MEATAKFDFMASGEDELSFRTGDILKILSNQEEWLKAELGSQEGYVPKNFIDIEFP. Y45 carries the phosphotyrosine modification. The 92-residue stretch at 58 to 149 folds into the SH2 domain; the sequence is WFHEGLSRHQ…QKQVFLRDGT (92 aa). N6-acetyllysine is present on K106. The segment at 143-216 is disordered; that stretch reads VFLRDGTQDQ…TPGPQPPQQQ (74 aa). Basic and acidic residues predominate over residues 148 to 163; it reads GTQDQGHRGNSLDRRS. S186 is subject to Phosphoserine. Positions 193-204 are enriched in low complexity; sequence PQQFHPHQQPSP. Phosphoserine is present on S230. T254 is subject to Phosphothreonine. The region spanning 263 to 322 is the SH3 2 domain; it reads GRVRWARALYDFEALEEDELGFRSGEVVEVLDSSNPSWWTGRLHNKLGLFPANYVAPMMR.

The protein belongs to the GRB2/sem-5/DRK family. Interacts with phosphorylated LAT and LAX1 upon TCR activation. Interacts with SHB. Interacts with PTPN23. Interacts with phosphorylated LIME1 upon TCR activation.

It is found in the nucleus. Its subcellular location is the cytoplasm. The protein localises to the endosome. Interacts with SLP-76 to regulate NF-AT activation. Binds to tyrosine-phosphorylated shc. This Mus musculus (Mouse) protein is GRB2-related adaptor protein 2 (Grap2).